Reading from the N-terminus, the 279-residue chain is Dehydrogenase/reductase SDR family member 4 (279 aa).

37–61 (LVTASTDGIGFAIARRLAEDGAHVV) lines the NADP(+) pocket. K93 carries the N6-acetyllysine; alternate modification. Position 93 is an N6-succinyllysine; alternate (K93). At K106 the chain carries N6-acetyllysine. S170 is a binding site for substrate. Y183 (proton acceptor) is an active-site residue. K187 contributes to the NADP(+) binding site. K217 is subject to N6-acetyllysine; alternate. N6-succinyllysine; alternate is present on K217. S221 is modified (phosphoserine). K228 and K235 each carry N6-succinyllysine. Positions 277-279 (SRL) match the Peroxisomal targeting signal motif.

Belongs to the short-chain dehydrogenases/reductases (SDR) family. As to quaternary structure, homotetramer.

It localises to the peroxisome. The catalysed reaction is a secondary alcohol + NADP(+) = a ketone + NADPH + H(+). It catalyses the reaction 3alpha-hydroxy-5beta-pregnan-20-one + NADP(+) = 5beta-pregnan-3,20-dione + NADPH + H(+). The enzyme catalyses 5beta-dihydrotestosterone + NADPH + H(+) = 5beta-androstane-3alpha,17beta-diol + NADP(+). It carries out the reaction all-trans-retinol + NADP(+) = all-trans-retinal + NADPH + H(+). The catalysed reaction is isatin + NADPH + H(+) = 3-hydroxyindolin-2-one + NADP(+). In terms of biological role, NADPH-dependent oxidoreductase which catalyzes the reduction of a variety of compounds bearing carbonyl groups including ketosteroids, alpha-dicarbonyl compounds, aldehydes, aromatic ketones and quinones. Reduces all-trans-retinal and 9-cis retinal. Reduces 3-ketosteroids and benzil into 3alpha-hydroxysteroids and S-benzoin, respectively, in contrast to the stereoselectivity of primates DHRS4s which produce 3beta-hydroxysteroids and R-benzoin. In the reverse reaction, catalyzes the NADP-dependent oxidation of 3alpha-hydroxysteroids and alcohol, but with much lower efficiency. Involved in the metabolism of 3alpha-hydroxysteroids, retinoid, isatin and xenobiotic carbonyl compounds. This Mus musculus (Mouse) protein is Dehydrogenase/reductase SDR family member 4.